We begin with the raw amino-acid sequence, 345 residues long: Cytoplasmic envelopment protein 2 (345 aa).

Positions 26–35 are nuclear localization signal 1; the sequence is KLVGKSRKHR. A nuclear export signal region spans residues 55 to 63; the sequence is CILCQLLLL. The tract at residues 90 to 94 is nuclear localization signal 2; it reads RRRRR.

It belongs to the herpesviridae cytoplasmic envelopment protein 2 family. As to quaternary structure, interacts with cytoplasmic envelopment protein 3 and with the capsid. Interacts with host STING1; this interaction prevents viral DNA-triggered antiviral immune response.

Its subcellular location is the virion tegument. The protein localises to the host cytoplasm. It is found in the host nucleus. Functionally, plays a critical role in cytoplasmic virus egress. Participates in the final step of tegumentation and envelope acquisition within the host cytoplasm by directly interacting with the capsid. Upon virion binding to target cell, a signaling cascade is triggered to disrupt the interaction with the capsid, thereby preparing capsid uncoating. Additionally, antagonizes the viral DNA-triggered antiviral immune response by targeting host STING1 and preventing its dimerization and trafficking. This is Cytoplasmic envelopment protein 2 (UL94) from Human cytomegalovirus (strain AD169) (HHV-5).